A 174-amino-acid polypeptide reads, in one-letter code: NAD(P)H-quinone oxidoreductase subunit J (174 aa).

The protein belongs to the complex I 30 kDa subunit family. NDH-1 can be composed of about 15 different subunits; different subcomplexes with different compositions have been identified which probably have different functions.

It is found in the cellular thylakoid membrane. It catalyses the reaction a plastoquinone + NADH + (n+1) H(+)(in) = a plastoquinol + NAD(+) + n H(+)(out). The enzyme catalyses a plastoquinone + NADPH + (n+1) H(+)(in) = a plastoquinol + NADP(+) + n H(+)(out). Functionally, NDH-1 shuttles electrons from an unknown electron donor, via FMN and iron-sulfur (Fe-S) centers, to quinones in the respiratory and/or the photosynthetic chain. The immediate electron acceptor for the enzyme in this species is believed to be plastoquinone. Couples the redox reaction to proton translocation, and thus conserves the redox energy in a proton gradient. Cyanobacterial NDH-1 also plays a role in inorganic carbon-concentration. This Picosynechococcus sp. (strain ATCC 27264 / PCC 7002 / PR-6) (Agmenellum quadruplicatum) protein is NAD(P)H-quinone oxidoreductase subunit J.